A 504-amino-acid polypeptide reads, in one-letter code: Maturase K (504 aa).

This sequence belongs to the intron maturase 2 family. MatK subfamily.

It is found in the plastid. Its subcellular location is the chloroplast. Usually encoded in the trnK tRNA gene intron. Probably assists in splicing its own and other chloroplast group II introns. The protein is Maturase K of Ochroma pyramidale (Balsa).